Here is a 440-residue protein sequence, read N- to C-terminus: Tol-Pal system protein TolB (440 aa).

The first 21 residues, 1–21, serve as a signal peptide directing secretion; the sequence is MKIFGKWLLVTLLICSMPVKA.

This sequence belongs to the TolB family. As to quaternary structure, the Tol-Pal system is composed of five core proteins: the inner membrane proteins TolA, TolQ and TolR, the periplasmic protein TolB and the outer membrane protein Pal. They form a network linking the inner and outer membranes and the peptidoglycan layer.

It is found in the periplasm. Its function is as follows. Part of the Tol-Pal system, which plays a role in outer membrane invagination during cell division and is important for maintaining outer membrane integrity. This chain is Tol-Pal system protein TolB, found in Shewanella halifaxensis (strain HAW-EB4).